A 336-amino-acid polypeptide reads, in one-letter code: Inositol 2-dehydrogenase (336 aa).

This sequence belongs to the Gfo/Idh/MocA family. In terms of assembly, homotetramer.

It catalyses the reaction myo-inositol + NAD(+) = scyllo-inosose + NADH + H(+). Involved in the oxidation of myo-inositol (MI) to 2-keto-myo-inositol (2KMI or 2-inosose). The polypeptide is Inositol 2-dehydrogenase (Pseudomonas savastanoi pv. phaseolicola (strain 1448A / Race 6) (Pseudomonas syringae pv. phaseolicola (strain 1448A / Race 6))).